Consider the following 103-residue polypeptide: Large ribosomal subunit protein uL24 (103 aa).

The protein belongs to the universal ribosomal protein uL24 family. Part of the 50S ribosomal subunit.

Functionally, one of two assembly initiator proteins, it binds directly to the 5'-end of the 23S rRNA, where it nucleates assembly of the 50S subunit. Its function is as follows. One of the proteins that surrounds the polypeptide exit tunnel on the outside of the subunit. This is Large ribosomal subunit protein uL24 from Dehalococcoides mccartyi (strain ATCC BAA-2100 / JCM 16839 / KCTC 5957 / BAV1).